The sequence spans 222 residues: Histidine biosynthesis bifunctional protein HisIE (222 aa).

A phosphoribosyl-AMP cyclohydrolase region spans residues 1–128; the sequence is MQPLSPAFID…SNALSPPADA (128 aa). The phosphoribosyl-ATP pyrophosphohydrolase stretch occupies residues 129-222; sequence CTELFRVIES…AARRGAPRRH (94 aa).

This sequence in the N-terminal section; belongs to the PRA-CH family. In the C-terminal section; belongs to the PRA-PH family.

Its subcellular location is the cytoplasm. It carries out the reaction 1-(5-phospho-beta-D-ribosyl)-ATP + H2O = 1-(5-phospho-beta-D-ribosyl)-5'-AMP + diphosphate + H(+). The catalysed reaction is 1-(5-phospho-beta-D-ribosyl)-5'-AMP + H2O = 1-(5-phospho-beta-D-ribosyl)-5-[(5-phospho-beta-D-ribosylamino)methylideneamino]imidazole-4-carboxamide. It participates in amino-acid biosynthesis; L-histidine biosynthesis; L-histidine from 5-phospho-alpha-D-ribose 1-diphosphate: step 2/9. Its pathway is amino-acid biosynthesis; L-histidine biosynthesis; L-histidine from 5-phospho-alpha-D-ribose 1-diphosphate: step 3/9. This chain is Histidine biosynthesis bifunctional protein HisIE, found in Parasynechococcus marenigrum (strain WH8102).